A 732-amino-acid chain; its full sequence is Cyclopenase asqI (732 aa).

Positions 168, 172, and 200 each coordinate Zn(2+).

Belongs to the tyrosinase family. Zn(2+) is required as a cofactor.

It carries out the reaction (-)-cyclopenine = viridicatin + methyl isocyanate + H(+). The enzyme catalyses (-)-4'-methoxycyclopenine = 4'-methoxyviridicatin + methyl isocyanate + H(+). Its pathway is secondary metabolite biosynthesis. It participates in alkaloid biosynthesis. The protein operates within mycotoxin biosynthesis. Cyclopenase; part of the gene cluster that mediates the biosynthesis of the aspoquinolone mycotoxins. Within the pathway, the cyclopenase asqI catalyzes the conversion of 4'-methoxycyclopenin into 4'-methoxyviridicatin. Cyclopenin can also be converted into viridicatin by asqI. The first step of the pathway is catalyzed by the nonribosomal peptide synthetase asqK that condenses anthranilic acid and O-methyl-L-tyrosine to produce 4'-methoxycyclopeptin. 4'-methoxycyclopeptin is then converted to 4'-methoxydehydrocyclopeptin by the ketoglutarate-dependent dioxygenase asqJ. AsqJ also converts its first product 4'-methoxydehydrocyclopeptin to 4'-methoxycyclopenin. The following conversion of 4'-methoxycyclopenin into 4'-methoxyviridicatin is catalyzed by the cyclopenase asqI. 4'-methoxyviridicatin is the precursor of quinolone natural products, and is further converted to quinolinone B. The prenyltransferase asqH1 then catalyzes the canonical Friedel-Crafts alkylation of quinolinone B with dimethylallyl cation to yield dimethylallyl quinolone, which is subjected to FAD-dependent dehydrogenation by the FAD-linked oxidoreductase asqF to yield conjugated aryl diene. The delta(3') double bond then serves as the site of the second alkylation with DMAPP catalyzed by the prenyltransferase asqH2 to yield a carbenium ion intermediate, which can be attacked by H(2)O to yield a styrenyl quinolone containing a C3'-hydroxyprenyl chain. The FAD-dependent monooxygenase asqG performs epoxidation of the terminal C7'-C8' olefin. Finally, after dehydratation of the epoxide at C3 by asqC, the quinolone epoxide rearrangement protein asqO catalyzes an enzymatic 3-exo-tet cyclization to yield the cyclopropyl-THF ring system in aspoquinolone. The chain is Cyclopenase asqI from Emericella nidulans (strain FGSC A4 / ATCC 38163 / CBS 112.46 / NRRL 194 / M139) (Aspergillus nidulans).